Consider the following 284-residue polypeptide: 2-dehydro-3-deoxyphosphooctonate aldolase (284 aa).

The protein belongs to the KdsA family.

Its subcellular location is the cytoplasm. The enzyme catalyses D-arabinose 5-phosphate + phosphoenolpyruvate + H2O = 3-deoxy-alpha-D-manno-2-octulosonate-8-phosphate + phosphate. It participates in carbohydrate biosynthesis; 3-deoxy-D-manno-octulosonate biosynthesis; 3-deoxy-D-manno-octulosonate from D-ribulose 5-phosphate: step 2/3. Its pathway is bacterial outer membrane biogenesis; lipopolysaccharide biosynthesis. The sequence is that of 2-dehydro-3-deoxyphosphooctonate aldolase from Salmonella paratyphi A (strain ATCC 9150 / SARB42).